The primary structure comprises 427 residues: 3-phosphoshikimate 1-carboxyvinyltransferase (427 aa).

Residues Lys-22, Ser-23, and Arg-27 each contribute to the 3-phosphoshikimate site. Lys-22 lines the phosphoenolpyruvate pocket. Residues Gly-96 and Arg-124 each coordinate phosphoenolpyruvate. Residues Ser-170, Ser-171, Gln-172, Ser-198, Asp-314, Asn-337, and Lys-341 each coordinate 3-phosphoshikimate. Gln-172 is a binding site for phosphoenolpyruvate. Residue Asp-314 is the Proton acceptor of the active site. The phosphoenolpyruvate site is built by Arg-345, Arg-387, and Lys-412.

Belongs to the EPSP synthase family. As to quaternary structure, monomer.

The protein localises to the cytoplasm. It catalyses the reaction 3-phosphoshikimate + phosphoenolpyruvate = 5-O-(1-carboxyvinyl)-3-phosphoshikimate + phosphate. It participates in metabolic intermediate biosynthesis; chorismate biosynthesis; chorismate from D-erythrose 4-phosphate and phosphoenolpyruvate: step 6/7. In terms of biological role, catalyzes the transfer of the enolpyruvyl moiety of phosphoenolpyruvate (PEP) to the 5-hydroxyl of shikimate-3-phosphate (S3P) to produce enolpyruvyl shikimate-3-phosphate and inorganic phosphate. In Sulfurovum sp. (strain NBC37-1), this protein is 3-phosphoshikimate 1-carboxyvinyltransferase.